Here is a 282-residue protein sequence, read N- to C-terminus: HTH-type transcriptional activator RhaR (282 aa).

An HTH araC/xylS-type domain is found at 179–277; that stretch reads DKLITALANS…GMTPSQWRHL (99 aa). 2 consecutive DNA-binding regions (H-T-H motif) follow at residues 196–217 and 244–267; these read DAFC…RAQT and VSEI…TRET.

In terms of assembly, binds DNA as a dimer.

It is found in the cytoplasm. In terms of biological role, activates expression of the rhaSR operon in response to L-rhamnose. The chain is HTH-type transcriptional activator RhaR from Salmonella choleraesuis (strain SC-B67).